Consider the following 338-residue polypeptide: Ferredoxin--NADP reductase (338 aa).

FAD is bound by residues D38, Q46, Y51, V91, F125, D291, and T331.

This sequence belongs to the ferredoxin--NADP reductase type 2 family. As to quaternary structure, homodimer. Requires FAD as cofactor.

It catalyses the reaction 2 reduced [2Fe-2S]-[ferredoxin] + NADP(+) + H(+) = 2 oxidized [2Fe-2S]-[ferredoxin] + NADPH. In Orientia tsutsugamushi (strain Ikeda) (Rickettsia tsutsugamushi), this protein is Ferredoxin--NADP reductase.